We begin with the raw amino-acid sequence, 444 residues long: Xylose isomerase (444 aa).

Residues His101 and Asp104 contribute to the active site. Mg(2+) contacts are provided by Glu232, Glu268, His271, Asp296, Asp307, Asp309, and Asp339.

This sequence belongs to the xylose isomerase family. As to quaternary structure, homotetramer. Mg(2+) serves as cofactor.

The protein resides in the cytoplasm. The catalysed reaction is alpha-D-xylose = alpha-D-xylulofuranose. This is Xylose isomerase from Thermotoga sp. (strain RQ2).